The primary structure comprises 591 residues: Aspartate--tRNA(Asp/Asn) ligase (591 aa).

Residue Glu174 participates in L-aspartate binding. The interval 198 to 201 (QLFK) is aspartate. L-aspartate is bound at residue Arg220. Residues 220–222 (RDE) and Gln229 each bind ATP. His450 contributes to the L-aspartate binding site. Position 483 (Glu483) interacts with ATP. Arg490 serves as a coordination point for L-aspartate. 535–538 (GLDR) contributes to the ATP binding site.

The protein belongs to the class-II aminoacyl-tRNA synthetase family. Type 1 subfamily. Homodimer.

It is found in the cytoplasm. It carries out the reaction tRNA(Asx) + L-aspartate + ATP = L-aspartyl-tRNA(Asx) + AMP + diphosphate. In terms of biological role, aspartyl-tRNA synthetase with relaxed tRNA specificity since it is able to aspartylate not only its cognate tRNA(Asp) but also tRNA(Asn). Reaction proceeds in two steps: L-aspartate is first activated by ATP to form Asp-AMP and then transferred to the acceptor end of tRNA(Asp/Asn). This is Aspartate--tRNA(Asp/Asn) ligase from Pseudomonas fluorescens (strain SBW25).